We begin with the raw amino-acid sequence, 527 residues long: Putative pumilio homolog 13 (527 aa).

Residues 22–51 are disordered; that stretch reads ENMTTAASSSQSQPPQMQSSKFHQPENHIH. Positions 24–41 are enriched in low complexity; sequence MTTAASSSQSQPPQMQSS. The 344-residue stretch at 184–527 folds into the PUM-HD domain; it reads GVNNSWRSNE…GNKILEKLNI (344 aa). 8 Pumilio repeats span residues 205 to 243, 244 to 279, 283 to 321, 322 to 357, 358 to 396, 397 to 432, 433 to 468, and 469 to 503; these read SMENGRGSYFSIATDRVWSKELEKTIFVGTKETIDMIFD, GLIVGICELMVDPFGNDVVKLLIGKCSSEQIILIVD, RHISKFVNICFNPIGTLAIQVLLTSIHERANNQIPRIMD, AISSVALQLTRNTNAKYVILACFRMFTSSQCRRLLE, VVSQHCYQIAIDQNGCCLLQQCFDKERVPNHEIRQRLIS, EVIEHALKLCLNCHGNYVVQYVVELDNQHETDLLVN, KLLRNYAHLARNKYGSHVVQKLLKLRGIDSKLIVVD, and LLRGIDTLLLDPFGNYVIQTAWFVSKEDVRQMLRY.

The protein resides in the cytoplasm. In terms of biological role, sequence-specific RNA-binding protein that regulates translation and mRNA stability by binding the 3'-UTR of target mRNAs. This Arabidopsis thaliana (Mouse-ear cress) protein is Putative pumilio homolog 13 (APUM13).